The primary structure comprises 232 residues: Ubiquinone biosynthesis O-methyltransferase (232 aa).

Residues R36, G55, D76, and M120 each coordinate S-adenosyl-L-methionine.

It belongs to the methyltransferase superfamily. UbiG/COQ3 family.

It carries out the reaction a 3-demethylubiquinol + S-adenosyl-L-methionine = a ubiquinol + S-adenosyl-L-homocysteine + H(+). The enzyme catalyses a 3-(all-trans-polyprenyl)benzene-1,2-diol + S-adenosyl-L-methionine = a 2-methoxy-6-(all-trans-polyprenyl)phenol + S-adenosyl-L-homocysteine + H(+). It functions in the pathway cofactor biosynthesis; ubiquinone biosynthesis. In terms of biological role, O-methyltransferase that catalyzes the 2 O-methylation steps in the ubiquinone biosynthetic pathway. The protein is Ubiquinone biosynthesis O-methyltransferase of Paraburkholderia phymatum (strain DSM 17167 / CIP 108236 / LMG 21445 / STM815) (Burkholderia phymatum).